Reading from the N-terminus, the 355-residue chain is cGAMP-activated phospholipase (355 aa).

One can recognise a PNPLA domain in the interval 17–214 (LSLNGGGARG…VANNPSFIGL (198 aa)). Residues 21-26 (GGGARG) carry the GXGXXG motif. A GXSXG motif is present at residues 60 to 64 (GTSIG). Ser-62 serves as the catalytic Nucleophile. Asp-201 (proton acceptor) is an active-site residue. The short motif at 201–203 (DGG) is the DGA/G element.

This sequence belongs to the patatin family.

It catalyses the reaction a 1,2-diacyl-sn-glycero-3-phosphocholine + H2O = a 2-acyl-sn-glycero-3-phosphocholine + a fatty acid + H(+). The enzyme catalyses 1,2-di-(9Z-octadecenoyl)-sn-glycero-3-phosphoethanolamine + 2 H2O = sn-glycero-3-phosphoethanolamine + 2 (9Z)-octadecenoate + 2 H(+). With respect to regulation, phospholipase activity is specifically activated upon 3',3'-cGAMP (cGAMP) binding. Is not activated by the other cyclic dinucleotides 3',3'-cUAMP, 3',3'-c-diAMP and 3',3'-c-diGMP. Therefore, is specifically activated by only the nucleotide synthesized from its adjacently encoded nucleotidyltransferase (DncV). The cGAMP-activation of lipase is inhibited by T4 phage protein Acb2 (Vs.4). Its function is as follows. Effector phospholipase of a CBASS antiviral system. CBASS (cyclic oligonucleotide-based antiphage signaling system) provides immunity against bacteriophages. The CD-NTase protein (DncV) synthesizes cyclic nucleotides in response to infection; these serve as specific second messenger signals. The signals activate a diverse range of effectors, leading to bacterial cell death and thus abortive phage infection. A type II-A(GA) CBASS system. In terms of biological role, phospholipase that is activated upon binding to the cyclic dinucleotide (CDN) second messenger 3',3'-cyclic GMP-AMP (3',3'-cGAMP). Then degrades phosphatidylethanolamine (PE) and phosphatidylglycerol (PG), the major phospholipids in the cell membrane of V.cholerae, releasing 16:1 and 18:1 free fatty acids. Upon expression in E.coli with cognate DncV, the cell inner membrane shrinks and separates from the cell wall. Functionally, protects E.coli against phage infection. When the CBASS operon (capV-dncV-cap2-cap3) is introduced in E.coli MG1655 there is about 100-fold protection against phages P1 and T2. When the operon is introduced in E.coli MG1655 there is a more than 10(3) decrease in the efficiency of T2 plaque formation. Protects 100-fold against phage T5, offers no protection against T7. When the operon is introduced in E.coli MG1655 it protects against phages T2, T4, T5 and T6. Another paper shows the operon confers protection against phages P1, T2, T5 and T6 but not T4 or lambda. The sequence is that of cGAMP-activated phospholipase from Vibrio cholerae serotype O1 (strain ATCC 39315 / El Tor Inaba N16961).